The following is a 1242-amino-acid chain: DNA-directed RNA polymerase RPB2 homolog (1242 aa).

The C4-type zinc finger occupies 1180 to 1201; the sequence is CRNCGEPAIYNASHPIYKCMNC.

It belongs to the RNA polymerase beta chain family. Part of the viral DNA-directed RNA polymerase that consists of 8 polII-like subunits (RPB1, RPB2, RPB3, RPB5, RPB6, RPB7, RPB9, RPB10), a capping enzyme and a termination factor.

The protein localises to the host cytoplasm. Its subcellular location is the virion. It carries out the reaction RNA(n) + a ribonucleoside 5'-triphosphate = RNA(n+1) + diphosphate. Its function is as follows. Catalytic component of the DNA-directed RNA polymerase (RNAP) that catalyzes the transcription in the cytoplasm of viral DNA into RNA using the four ribonucleoside triphosphates as substrates. Forms the polymerase active center together with RPB1. Part of the core element with the central large cleft, the clamp element that moves to open and close the cleft and the jaws that are thought to grab the incoming DNA template. The protein is DNA-directed RNA polymerase RPB2 homolog of African swine fever virus (isolate Pig/Kenya/KEN-50/1950) (ASFV).